Here is a 366-residue protein sequence, read N- to C-terminus: Subtilisin-like protease het-Q2 (366 aa).

The Peptidase S8 domain occupies 1–321 (MSAISHHSLS…RVLMALGEKT (321 aa)). Asp35 acts as the Charge relay system in catalysis. The disordered stretch occupies residues 79–98 (DFCQPSPPGDRQGPPPQPHS). Positions 83-96 (PSPPGDRQGPPPQP) are enriched in pro residues. Catalysis depends on charge relay system residues His105 and Ser266. Residues 261-283 (LVSGSSFATPVVVSVAALVLAFV) form a helical membrane-spanning segment.

The protein belongs to the peptidase S8 family.

The protein localises to the membrane. In terms of biological role, serine protease involved in heterokaryon incompatibility, a process that ensures that during spontaneous vegetative cell fusion, only compatible cells from the same colony survive (non-self-recognition). In P.anserina, the het-q locus exists as 2 incompatible alleles, het-Q1 (AC B2AXJ5) and het-Q2 (this entry). Prevents cell fusion with strains containing the gasdermin-like protein het-Q1 by mediating proteolytic cleavage and maturation of het-Q1 during the allorecognition process, thereby triggering cell death. This chain is Subtilisin-like protease het-Q2, found in Podospora anserina (Pleurage anserina).